A 310-amino-acid chain; its full sequence is Putative HTH-type transcriptional regulatory protein LS215_1371 (310 aa).

In terms of domain architecture, HTH cro/C1-type spans 125 to 180 (LKHKREEMGYSIGDVAKFLGVSRKAIYDYEKGDSDVSLEVAEKLIDLFGDDIIGDV). The H-T-H motif DNA-binding region spans 136-155 (IGDVAKFLGVSRKAIYDYEK).

In Saccharolobus islandicus (strain L.S.2.15 / Lassen #1) (Sulfolobus islandicus), this protein is Putative HTH-type transcriptional regulatory protein LS215_1371.